A 142-amino-acid chain; its full sequence is MVKPLYETKVISNGGRDGKVFSEDNTFYQDLAVPKEMGGNGVTESNPEQLFAAGYSACFNNALMHILKSDSKGTIEPEVSVTAYLLPDKNDGGVKLAAELDVTLTDMTQEEAETYVEKAHNYCPYSKALKESIDIEIQVSVN.

Belongs to the OsmC/Ohr family.

This Staphylococcus saprophyticus subsp. saprophyticus (strain ATCC 15305 / DSM 20229 / NCIMB 8711 / NCTC 7292 / S-41) protein is Organic hydroperoxide resistance protein-like 2.